Reading from the N-terminus, the 170-residue chain is Small ribosomal subunit protein uS5 (170 aa).

The S5 DRBM domain occupies 13–76; sequence LLEKLVGVRR…ENARKNMISV (64 aa).

Belongs to the universal ribosomal protein uS5 family. Part of the 30S ribosomal subunit. Contacts proteins S4 and S8.

With S4 and S12 plays an important role in translational accuracy. In terms of biological role, located at the back of the 30S subunit body where it stabilizes the conformation of the head with respect to the body. In Nitrosococcus oceani (strain ATCC 19707 / BCRC 17464 / JCM 30415 / NCIMB 11848 / C-107), this protein is Small ribosomal subunit protein uS5.